We begin with the raw amino-acid sequence, 218 residues long: Kynurenine formamidase (218 aa).

Position 27 (Trp-27) interacts with substrate. Residues His-57, His-61, and Asp-63 each coordinate Zn(2+). The active-site Proton donor/acceptor is His-67. 2 residues coordinate Zn(2+): His-169 and Glu-181.

This sequence belongs to the Cyclase 1 superfamily. KynB family. As to quaternary structure, homodimer. Zn(2+) is required as a cofactor.

The catalysed reaction is N-formyl-L-kynurenine + H2O = L-kynurenine + formate + H(+). It functions in the pathway amino-acid degradation; L-tryptophan degradation via kynurenine pathway; L-kynurenine from L-tryptophan: step 2/2. Inhibited by EDTA. Insensitive to phenylmethylsulfonyl fluoride (PMSF). Functionally, catalyzes the hydrolysis of N-formyl-L-kynurenine to L-kynurenine, the second step in the kynurenine pathway of tryptophan degradation. The polypeptide is Kynurenine formamidase (Cupriavidus metallidurans (strain ATCC 43123 / DSM 2839 / NBRC 102507 / CH34) (Ralstonia metallidurans)).